The sequence spans 81 residues: Conotoxin Eb11.3 (81 aa).

Positions 1–23 (MMFRLTSVWCLLVIVLLNSAVDG) are cleaved as a signal peptide. 4 cysteine pairs are disulfide-bonded: cysteine 27-cysteine 41, cysteine 34-cysteine 48, cysteine 40-cysteine 56, and cysteine 47-cysteine 62. Leucine 69 is subject to Leucine amide. A propeptide spanning residues 73–81 (AQYKRFFRR) is cleaved from the precursor.

It belongs to the conotoxin I2 superfamily. As to expression, expressed by the venom duct.

The protein resides in the secreted. The protein is Conotoxin Eb11.3 of Conus eburneus (Ivory cone).